A 354-amino-acid polypeptide reads, in one-letter code: S-adenosylmethionine:tRNA ribosyltransferase-isomerase (354 aa).

It belongs to the QueA family. In terms of assembly, monomer.

The protein resides in the cytoplasm. The enzyme catalyses 7-aminomethyl-7-carbaguanosine(34) in tRNA + S-adenosyl-L-methionine = epoxyqueuosine(34) in tRNA + adenine + L-methionine + 2 H(+). It participates in tRNA modification; tRNA-queuosine biosynthesis. Functionally, transfers and isomerizes the ribose moiety from AdoMet to the 7-aminomethyl group of 7-deazaguanine (preQ1-tRNA) to give epoxyqueuosine (oQ-tRNA). The protein is S-adenosylmethionine:tRNA ribosyltransferase-isomerase of Pseudomonas fluorescens (strain ATCC BAA-477 / NRRL B-23932 / Pf-5).